Here is a 206-residue protein sequence, read N- to C-terminus: RNA-binding protein with multiple splicing 2 (206 aa).

Ser2 bears the N-acetylserine mark. An RRM domain is found at 25–102 (RTLFVSGLPV…QTLRLEFAKA (78 aa)). Residues 35–45 (DIKPRELYLLF) form an important for homodimerization region.

Homodimer. Interacts with EEF2.

The protein resides in the cytoplasm. It localises to the nucleus. It is found in the stress granule. RNA-binding protein involved in the regulation of smooth muscle cell differentiation and proliferation in the gastrointestinal system. Binds NOG mRNA, the major inhibitor of the bone morphogenetic protein (BMP) pathway. Mediates an increase of NOG mRNA levels, thereby contributing to the negative regulation of BMP signaling pathway and promoting reversible dedifferentiation and proliferation of smooth muscle cells. Acts as a pre-mRNA alternative splicing regulator. Mediates ACTN1 and FLNB alternative splicing. Likely binds to mRNA tandem CAC trinucleotide or CA dinucleotide motifs. The sequence is that of RNA-binding protein with multiple splicing 2 (Rbpms2) from Mus musculus (Mouse).